Consider the following 295-residue polypeptide: Tyrosine recombinase XerD (295 aa).

Residues Met-1–Leu-85 enclose the Core-binding (CB) domain. One can recognise a Tyr recombinase domain in the interval Lys-106–Asn-289. Catalysis depends on residues Arg-146, Lys-170, His-241, Arg-244, and His-267. Tyr-276 (O-(3'-phospho-DNA)-tyrosine intermediate) is an active-site residue.

Belongs to the 'phage' integrase family. XerD subfamily. In terms of assembly, forms a cyclic heterotetrameric complex composed of two molecules of XerC and two molecules of XerD.

It localises to the cytoplasm. Functionally, site-specific tyrosine recombinase, which acts by catalyzing the cutting and rejoining of the recombining DNA molecules. The XerC-XerD complex is essential to convert dimers of the bacterial chromosome into monomers to permit their segregation at cell division. It also contributes to the segregational stability of plasmids. In Staphylococcus haemolyticus (strain JCSC1435), this protein is Tyrosine recombinase XerD.